We begin with the raw amino-acid sequence, 205 residues long: Thiamine-phosphate synthase (205 aa).

4-amino-2-methyl-5-(diphosphooxymethyl)pyrimidine is bound by residues 35-39 (QYRDK) and Asn67. Mg(2+) contacts are provided by Asp68 and Asp86. Residue Thr105 coordinates 4-amino-2-methyl-5-(diphosphooxymethyl)pyrimidine. A 2-[(2R,5Z)-2-carboxy-4-methylthiazol-5(2H)-ylidene]ethyl phosphate-binding site is contributed by 132 to 134 (SQT). A 4-amino-2-methyl-5-(diphosphooxymethyl)pyrimidine-binding site is contributed by Lys135. Gly162 lines the 2-[(2R,5Z)-2-carboxy-4-methylthiazol-5(2H)-ylidene]ethyl phosphate pocket.

This sequence belongs to the thiamine-phosphate synthase family. Mg(2+) is required as a cofactor.

The enzyme catalyses 2-[(2R,5Z)-2-carboxy-4-methylthiazol-5(2H)-ylidene]ethyl phosphate + 4-amino-2-methyl-5-(diphosphooxymethyl)pyrimidine + 2 H(+) = thiamine phosphate + CO2 + diphosphate. The catalysed reaction is 2-(2-carboxy-4-methylthiazol-5-yl)ethyl phosphate + 4-amino-2-methyl-5-(diphosphooxymethyl)pyrimidine + 2 H(+) = thiamine phosphate + CO2 + diphosphate. It catalyses the reaction 4-methyl-5-(2-phosphooxyethyl)-thiazole + 4-amino-2-methyl-5-(diphosphooxymethyl)pyrimidine + H(+) = thiamine phosphate + diphosphate. It participates in cofactor biosynthesis; thiamine diphosphate biosynthesis; thiamine phosphate from 4-amino-2-methyl-5-diphosphomethylpyrimidine and 4-methyl-5-(2-phosphoethyl)-thiazole: step 1/1. Its function is as follows. Condenses 4-methyl-5-(beta-hydroxyethyl)thiazole monophosphate (THZ-P) and 2-methyl-4-amino-5-hydroxymethyl pyrimidine pyrophosphate (HMP-PP) to form thiamine monophosphate (TMP). This chain is Thiamine-phosphate synthase, found in Pseudomonas syringae pv. tomato (strain ATCC BAA-871 / DC3000).